The chain runs to 289 residues: Probable porphobilinogen deaminase (289 aa).

The residue at position 233 (Cys-233) is an S-(dipyrrolylmethanemethyl)cysteine.

The protein belongs to the HMBS family. It depends on dipyrromethane as a cofactor.

It carries out the reaction 4 porphobilinogen + H2O = hydroxymethylbilane + 4 NH4(+). Its pathway is porphyrin-containing compound metabolism; protoporphyrin-IX biosynthesis; coproporphyrinogen-III from 5-aminolevulinate: step 2/4. Functionally, tetrapolymerization of the monopyrrole PBG into the hydroxymethylbilane pre-uroporphyrinogen in several discrete steps. The polypeptide is Probable porphobilinogen deaminase (hemC) (Methanothermobacter thermautotrophicus (strain ATCC 29096 / DSM 1053 / JCM 10044 / NBRC 100330 / Delta H) (Methanobacterium thermoautotrophicum)).